Here is a 513-residue protein sequence, read N- to C-terminus: Na(+)/H(+) antiporter NhaB (513 aa).

9 helical membrane passes run 21 to 41 (ICII…SPFV), 88 to 108 (IMAN…IYFM), 119 to 139 (LLIV…SATF), 243 to 263 (LPVS…LEHF), 299 to 318 (MGIQ…LHLA), 322 to 344 (IIGL…HAIG), 350 to 370 (PMPF…IVDL), 389 to 409 (LALF…VFVG), and 477 to 497 (MALP…EFLL).

Belongs to the NhaB Na(+)/H(+) (TC 2.A.34) antiporter family.

It localises to the cell inner membrane. It catalyses the reaction 2 Na(+)(in) + 3 H(+)(out) = 2 Na(+)(out) + 3 H(+)(in). Its function is as follows. Na(+)/H(+) antiporter that extrudes sodium in exchange for external protons. In Actinobacillus pleuropneumoniae serotype 5b (strain L20), this protein is Na(+)/H(+) antiporter NhaB.